Reading from the N-terminus, the 648-residue chain is DNA ligase (648 aa).

NAD(+) is bound by residues 30–34 (DEEYD) and 79–80 (SQ). Lys-110 (N6-AMP-lysine intermediate) is an active-site residue. NAD(+)-binding residues include Arg-131, Glu-165, Lys-280, and Lys-304. Zn(2+) is bound by residues Cys-398, Cys-401, Cys-414, and Cys-419. Positions 573–648 (VSENPFKNKT…LTEEEMNSLF (76 aa)) constitute a BRCT domain.

Belongs to the NAD-dependent DNA ligase family. LigA subfamily. The cofactor is Mg(2+). Mn(2+) is required as a cofactor.

It carries out the reaction NAD(+) + (deoxyribonucleotide)n-3'-hydroxyl + 5'-phospho-(deoxyribonucleotide)m = (deoxyribonucleotide)n+m + AMP + beta-nicotinamide D-nucleotide.. In terms of biological role, DNA ligase that catalyzes the formation of phosphodiester linkages between 5'-phosphoryl and 3'-hydroxyl groups in double-stranded DNA using NAD as a coenzyme and as the energy source for the reaction. It is essential for DNA replication and repair of damaged DNA. This chain is DNA ligase, found in Aliarcobacter butzleri (strain RM4018) (Arcobacter butzleri).